The sequence spans 200 residues: QLCLLQPLGSGGFGSVYKATYHGATVAVKQVKNSSKNRLASRQSFWAELNVARLQHNNVVRVVAASTCAPASQNSLGTIVMEYVGNITLHHVIYGTGDVWRQSEDDEGGCGRKALSMEETVCYSCDIMTGLAFLHSQGIVHLDLKPANIFITEQGVCKIGDFGCSQKLEEGLSQSPHVCQQGGTYTHRAPELLKGERVTA.

Residues 2–200 form the Protein kinase domain; sequence LCLLQPLGSG…ELLKGERVTA (199 aa). Residues 8 to 16 and K29 each bind ATP; that span reads LGSGGFGSV. D143 serves as the catalytic Proton acceptor.

The protein belongs to the protein kinase superfamily. Ser/Thr protein kinase family.

It catalyses the reaction L-seryl-[protein] + ATP = O-phospho-L-seryl-[protein] + ADP + H(+). The catalysed reaction is L-threonyl-[protein] + ATP = O-phospho-L-threonyl-[protein] + ADP + H(+). This chain is Serine/threonine-protein kinase mos (MOS), found in Ciconia nigra (Black stork).